A 353-amino-acid polypeptide reads, in one-letter code: Nicotinate-nucleotide--dimethylbenzimidazole phosphoribosyltransferase (353 aa).

The active-site Proton acceptor is the Glu320.

The protein belongs to the CobT family.

The catalysed reaction is 5,6-dimethylbenzimidazole + nicotinate beta-D-ribonucleotide = alpha-ribazole 5'-phosphate + nicotinate + H(+). Its pathway is nucleoside biosynthesis; alpha-ribazole biosynthesis; alpha-ribazole from 5,6-dimethylbenzimidazole: step 1/2. Functionally, catalyzes the synthesis of alpha-ribazole-5'-phosphate from nicotinate mononucleotide (NAMN) and 5,6-dimethylbenzimidazole (DMB). The polypeptide is Nicotinate-nucleotide--dimethylbenzimidazole phosphoribosyltransferase (Pseudoalteromonas translucida (strain TAC 125)).